We begin with the raw amino-acid sequence, 447 residues long: Phosphoglucosamine mutase (447 aa).

S104 (phosphoserine intermediate) is an active-site residue. Residues S104, D243, D245, and D247 each coordinate Mg(2+). Phosphoserine is present on S104.

Belongs to the phosphohexose mutase family. Mg(2+) serves as cofactor. In terms of processing, activated by phosphorylation.

It carries out the reaction alpha-D-glucosamine 1-phosphate = D-glucosamine 6-phosphate. Catalyzes the conversion of glucosamine-6-phosphate to glucosamine-1-phosphate. The polypeptide is Phosphoglucosamine mutase (Corynebacterium efficiens (strain DSM 44549 / YS-314 / AJ 12310 / JCM 11189 / NBRC 100395)).